We begin with the raw amino-acid sequence, 367 residues long: Acryloyl-CoA reductase electron transfer subunit beta (367 aa).

305–333 contacts FAD; it reads VYVALGISGAIQHKAGMQDSELIIAVNKD.

In terms of assembly, heterohexadecamer; tetramer of tetramers. Each tetramer is composed of 2 alpha (AcrC), a beta (AcrA) and a gamma (AcrB) subunit.

It localises to the cytoplasm. Functionally, part of the ETF-acryloyl-CoA reductase complex involved in the pathway of L-alanine fermentation. The electron transfer flavoprotein (ETF) serves as a specific electron acceptor for acryloyl-CoA reductase. The protein is Acryloyl-CoA reductase electron transfer subunit beta (acrA) of Anaerotignum propionicum (Clostridium propionicum).